A 383-amino-acid polypeptide reads, in one-letter code: MKQAFNQRIRSALNQRKQAGLNRSRRVVSQGNQATLVVDGKSYLNFSGNDYLGLASSKELMEAWQEGLSLYGSGSGASPLVTGYSKPHANLESQLAEWLGFDCAILFNSGFSANQAVLFSLLEKGDTLLQDKLNHASLMEAGMLSPAVMKRFKHNDVGHLKSLLKRSSDEPTLVVTEGVFSMDGDLSPLADIATLTKENDAWLMVDDAHGCGVLGSNGKGCCDVHSITPDILIVTFGKGFGLSGAAVLCNQECGDYLSQFARHHVYSTAMPPAQAHALSHALLMIQQQEWRRDKLKELNQQFESELMNFVGAEKTPTPIKPIIIGEATDAMILADSLKERGLWTTAIRPPTVPVSSARIRVTLSANHSSADISALTQAINELG.

Position 23 (Arg-23) interacts with substrate. Position 110 to 111 (Gly-110 to Phe-111) interacts with pyridoxal 5'-phosphate. Position 135 (His-135) interacts with substrate. Pyridoxal 5'-phosphate contacts are provided by Ser-181, His-209, and Thr-235. Lys-238 is modified (N6-(pyridoxal phosphate)lysine). Substrate is bound at residue Thr-351.

Belongs to the class-II pyridoxal-phosphate-dependent aminotransferase family. BioF subfamily. In terms of assembly, homodimer. Pyridoxal 5'-phosphate is required as a cofactor.

It carries out the reaction 6-carboxyhexanoyl-[ACP] + L-alanine + H(+) = (8S)-8-amino-7-oxononanoate + holo-[ACP] + CO2. The protein operates within cofactor biosynthesis; biotin biosynthesis. In terms of biological role, catalyzes the decarboxylative condensation of pimeloyl-[acyl-carrier protein] and L-alanine to produce 8-amino-7-oxononanoate (AON), [acyl-carrier protein], and carbon dioxide. The sequence is that of 8-amino-7-oxononanoate synthase from Aliivibrio fischeri (strain MJ11) (Vibrio fischeri).